The chain runs to 381 residues: NAD-dependent methanol dehydrogenase (381 aa).

This sequence belongs to the iron-containing alcohol dehydrogenase family. Homodecamer. The cofactor is Mg(2+). Zn(2+) is required as a cofactor.

Its subcellular location is the cytoplasm. The catalysed reaction is methanol + NAD(+) = formaldehyde + NADH + H(+). The protein operates within one-carbon metabolism; methanol degradation; formaldehyde from methanol: step 1/1. With respect to regulation, stimulated by the activator protein Act which requires the presence of magnesium ions. Inhibited by 1,10-phenanthroline. Functionally, catalyzes the oxidation of methanol to yield formaldehyde. It possesses a NADH-dependent formaldehyde reductase activity and cannot use NADP. In Bacillus methanolicus, this protein is NAD-dependent methanol dehydrogenase.